A 213-amino-acid chain; its full sequence is Adenylate kinase (213 aa).

10-15 (GAGKGT) serves as a coordination point for ATP. The tract at residues 30–59 (AVGDIFRTIIKTSTSEAELINNYVKQGALI) is NMP. AMP contacts are provided by residues R36, 57–59 (ALI), 85–88 (GYPR), and Q92. The segment at 123–161 (GRYSCKNCGKIYNIHFLQPKIEHVCDVCSSSVFDYRKDD) is LID. An ATP-binding site is contributed by R124. Zn(2+)-binding residues include C127 and C130. ATP is bound at residue 133-134 (IY). Zn(2+) is bound by residues C147 and C150. Residues R158 and R169 each contribute to the AMP site. Residue K197 participates in ATP binding.

It belongs to the adenylate kinase family. In terms of assembly, monomer.

Its subcellular location is the cytoplasm. The catalysed reaction is AMP + ATP = 2 ADP. Its pathway is purine metabolism; AMP biosynthesis via salvage pathway; AMP from ADP: step 1/1. In terms of biological role, catalyzes the reversible transfer of the terminal phosphate group between ATP and AMP. Plays an important role in cellular energy homeostasis and in adenine nucleotide metabolism. This is Adenylate kinase from Rickettsia prowazekii (strain Madrid E).